We begin with the raw amino-acid sequence, 238 residues long: MRPSGRKTDQMRKVSFERNFSKHAEGSCLVKFGDTHVLVTASLEEKTPPWLRNSGKGWVTAEYGMLPRSTNERMKREAASGKQGGRTQEIQRLIGRSLRAVVDLQALGERQISIDCDVIQADGGTRTASITGAWIALHDCLKWMETRNMIKVEKVLKDHIAAISCGIFAKQPVIDLDYLEDSSAETDANFVITGSGGIVEVQGTAEGAPFSEEEFLTLLGLAKAGCSELVALQKQAIA.

Phosphate contacts are provided by residues Arg86 and 124-126 (GTR).

The protein belongs to the RNase PH family. As to quaternary structure, homohexameric ring arranged as a trimer of dimers.

It catalyses the reaction tRNA(n+1) + phosphate = tRNA(n) + a ribonucleoside 5'-diphosphate. Functionally, phosphorolytic 3'-5' exoribonuclease that plays an important role in tRNA 3'-end maturation. Removes nucleotide residues following the 3'-CCA terminus of tRNAs; can also add nucleotides to the ends of RNA molecules by using nucleoside diphosphates as substrates, but this may not be physiologically important. Probably plays a role in initiation of 16S rRNA degradation (leading to ribosome degradation) during starvation. This chain is Ribonuclease PH, found in Agrobacterium fabrum (strain C58 / ATCC 33970) (Agrobacterium tumefaciens (strain C58)).